The sequence spans 372 residues: Peptidyl-prolyl cis-trans isomerase D (372 aa).

The PPIase cyclophilin-type domain occupies 14–178 (YFDISIGGKS…KEALIVDCGE (165 aa)). TPR repeat units follow at residues 219–252 (AKAS…INEE), 271–304 (FSLN…GGVK), and 309–342 (AKAF…APND).

Belongs to the cyclophilin-type PPIase family. PPIase D subfamily.

It localises to the cytoplasm. The catalysed reaction is [protein]-peptidylproline (omega=180) = [protein]-peptidylproline (omega=0). In terms of biological role, PPIases accelerate the folding of proteins. It catalyzes the cis-trans isomerization of proline imidic peptide bonds in oligopeptides. This chain is Peptidyl-prolyl cis-trans isomerase D (CPR6), found in Gibberella zeae (strain ATCC MYA-4620 / CBS 123657 / FGSC 9075 / NRRL 31084 / PH-1) (Wheat head blight fungus).